The chain runs to 218 residues: Histone H1 (218 aa).

2 stretches are compositionally biased toward low complexity: residues 1-19 (MSETAPVAAPAVSAPGAKA) and 27-39 (AAGGSKARKPAGP). Disordered stretches follow at residues 1 to 41 (MSET…GPSV) and 89 to 218 (VGKG…PKKK). Serine 2 carries the post-translational modification N-acetylserine. An H15 domain is found at 37–110 (AGPSVTELIT…GASGSFKLNK (74 aa)). 4 stretches are compositionally biased toward basic residues: residues 119 to 133 (ATKKKPAAKPKKPAA), 141 to 158 (KKPKKAAAVKKSPKKAKK), 166 to 184 (KAAKSPKKAAKAGRPKKAA), and 191 to 218 (KAVKPKAAKPKAAKPKAAKAKKAAPKKK).

The protein belongs to the histone H1/H5 family.

The protein resides in the nucleus. It localises to the chromosome. Its function is as follows. Histones H1 are necessary for the condensation of nucleosome chains into higher-order structures. The sequence is that of Histone H1 from Anas platyrhynchos (Mallard).